Consider the following 506-residue polypeptide: 2-isopropylmalate synthase (506 aa).

The Pyruvate carboxyltransferase domain occupies 4-266; that stretch reads ILFMDTTLRD…EPSMTLKEIK (263 aa). Positions 13, 201, 203, and 237 each coordinate Mn(2+). The segment at 390-506 is regulatory domain; that stretch reads NITQLQVHFV…KLKSFIQLVK (117 aa).

It belongs to the alpha-IPM synthase/homocitrate synthase family. LeuA type 1 subfamily. As to quaternary structure, homodimer. It depends on Mn(2+) as a cofactor.

It localises to the cytoplasm. The enzyme catalyses 3-methyl-2-oxobutanoate + acetyl-CoA + H2O = (2S)-2-isopropylmalate + CoA + H(+). Its pathway is amino-acid biosynthesis; L-leucine biosynthesis; L-leucine from 3-methyl-2-oxobutanoate: step 1/4. Catalyzes the condensation of the acetyl group of acetyl-CoA with 3-methyl-2-oxobutanoate (2-ketoisovalerate) to form 3-carboxy-3-hydroxy-4-methylpentanoate (2-isopropylmalate). This chain is 2-isopropylmalate synthase, found in Bacillus anthracis (strain A0248).